The sequence spans 495 residues: Protein adenylyltransferase Fic (495 aa).

The interval 1-27 (MGTEAEQPSPPSPPAQQQEQTNPPLWN) is disordered. The chain crosses the membrane as a helical span at residues 36-55 (LYRLVLFFIAGSLAAWTIHA). 2 TPR repeats span residues 121-154 (ALVS…APRH) and 155-189 (PEVL…SPSN). An Inhibitory (S/T)XXXE(G/N) motif motif is present at residues 246–251 (SVGIEG). ATP contacts are provided by residues glutamate 250 and 331–334 (VGGH). A Fido domain is found at 300–435 (ITIKDILELH…IRPFVRFIAD (136 aa)). Residue histidine 378 is part of the active site. ATP contacts are provided by residues 382–389 (DGNGRTSR), 414–415 (YY), and asparagine 422.

It belongs to the fic family. In terms of assembly, homodimer.

Its subcellular location is the membrane. It carries out the reaction L-tyrosyl-[protein] + ATP = O-(5'-adenylyl)-L-tyrosyl-[protein] + diphosphate. It catalyses the reaction L-threonyl-[protein] + ATP = 3-O-(5'-adenylyl)-L-threonyl-[protein] + diphosphate. The enzyme catalyses 3-O-(5'-adenylyl)-L-threonyl-[protein] + H2O = L-threonyl-[protein] + AMP + H(+). With respect to regulation, the side chain of Glu-250 determines which of the two opposing activities (AMPylase or de-AMPylase) will take place. In response to endoplasmic reticulum stress, mediates de-AMPylase activity. Adenylyltransferase activity is inhibited by the inhibitory helix present at the N-terminus: Glu-250 binds ATP and competes with ATP-binding at Arg-389, thereby preventing adenylyltransferase activity. In unstressed cells, disengagement of Glu-250 promotes adenylyltransferase activity. Activation dissociates ATP-binding from Glu-250, allowing ordered binding of the entire ATP moiety with the alpha-phosphate in an orientation that is productive for accepting an incoming target hydroxyl side chain. Its function is as follows. Protein that can both mediate the addition of adenosine 5'-monophosphate (AMP) to specific residues of target proteins (AMPylation), and the removal of the same modification from target proteins (de-AMPylation), depending on the context. The side chain of Glu-250 determines which of the two opposing activities (AMPylase or de-AMPylase) will take place. Acts as a key regulator of the unfolded protein response (UPR) by mediating AMPylation or de-AMPylation of Hsc70-3/BiP. In unstressed cells, acts as an adenylyltransferase by mediating AMPylation of Hsc70-3/BiP at 'Thr-518', thereby inactivating it. In response to endoplasmic reticulum stress, acts as a phosphodiesterase by mediating removal of ATP (de-AMPylation) from Hsc70-3/BiP at 'Thr-518', leading to restore HSPA5/BiP activity. This chain is Protein adenylyltransferase Fic, found in Drosophila yakuba (Fruit fly).